A 196-amino-acid chain; its full sequence is Regulator of G-protein signaling 1 (196 aa).

Residues M1–K27 form a disordered region. The segment covering K11–T25 has biased composition (basic and acidic residues). Residues S72–L187 form the RGS domain.

In terms of assembly, interacts with GNAI1 and GNAQ.

It is found in the cell membrane. The protein resides in the cytoplasm. Its subcellular location is the cytosol. Its function is as follows. Regulates G protein-coupled receptor signaling cascades, including signaling downstream of the N-formylpeptide chemoattractant receptors and leukotriene receptors. Inhibits B cell chemotaxis toward CXCL12. Inhibits signal transduction by increasing the GTPase activity of G protein alpha subunits, thereby driving them into their inactive GDP-bound form. The polypeptide is Regulator of G-protein signaling 1 (RGS1) (Equus caballus (Horse)).